The primary structure comprises 669 residues: Dymeclin (669 aa).

A lipid anchor (N-myristoyl glycine) is attached at glycine 2.

It belongs to the dymeclin family. Interacts with GOLM1 and PPIB. In terms of processing, myristoylated in vitro; myristoylation is not essential for protein targeting to Golgi compartment. As to expression, expressed in most embryo-fetal and adult tissues. Abundant in primary chondrocytes, osteoblasts, cerebellum, kidney, lung, stomach, heart, pancreas and fetal brain. Very low or no expression in the spleen, thymus, esophagus, bladder and thyroid gland.

The protein localises to the cytoplasm. It is found in the golgi apparatus. It localises to the membrane. In terms of biological role, necessary for correct organization of Golgi apparatus. Involved in bone development. The chain is Dymeclin (DYM) from Homo sapiens (Human).